Consider the following 214-residue polypeptide: Calcineurin B homologous protein 3 (214 aa).

A lipid anchor (N-myristoyl glycine) is attached at G2. One can recognise an EF-hand domain in the interval 110–145; it reads FRKEKLKFLFHMYDADYDGIITLQEYKNVLDELMSG. D123, D125, D127, and E134 together coordinate Ca(2+).

The protein belongs to the calcineurin regulatory subunit family. CHP subfamily. Monomer. Homodimer. As to expression, expressed in the bipotential gonad by E4.5 and expressed in both the testis and ovary by E5.5, but with expression higher in the testis. Expressed in the testis cords but also at low levels in the interstitium. In the ovary, expression is principally in the ovarian cortex, but also in the medulla. Also expressed in the embryonic brain, with expression highest in the region between the nasal placode and olfactory bulb. Also expressed in the embryonic heart and tail.

The protein resides in the nucleus. It is found in the cytoplasm. It localises to the membrane. The protein localises to the cell membrane. Its subcellular location is the cell projection. The protein resides in the lamellipodium. It is found in the ruffle membrane. Functions as an integral cofactor in cell pH regulation by controlling plasma membrane-type Na(+)/H(+) exchange activity. Promotes the induction of hematopoietic stem cell differentiation toward megakaryocytic lineage. Essential for the coupling of ERK cascade activation with the expression of ETS family genes in megakaryocytic differentiation. Also involved in granulocytic differentiation in a ERK-dependent manner. Inhibits the phosphatase activity of calcineurin. The polypeptide is Calcineurin B homologous protein 3 (Gallus gallus (Chicken)).